The following is a 79-amino-acid chain: Small ribosomal subunit protein bS18 (79 aa).

It belongs to the bacterial ribosomal protein bS18 family. Part of the 30S ribosomal subunit. Forms a tight heterodimer with protein bS6.

Its function is as follows. Binds as a heterodimer with protein bS6 to the central domain of the 16S rRNA, where it helps stabilize the platform of the 30S subunit. This chain is Small ribosomal subunit protein bS18, found in Bacillus licheniformis (strain ATCC 14580 / DSM 13 / JCM 2505 / CCUG 7422 / NBRC 12200 / NCIMB 9375 / NCTC 10341 / NRRL NRS-1264 / Gibson 46).